Consider the following 315-residue polypeptide: Ribonuclease HII (315 aa).

The 190-residue stretch at threonine 78 to leucine 267 folds into the RNase H type-2 domain. A divalent metal cation contacts are provided by aspartate 84, glutamate 85, and aspartate 176. Residues alanine 273–alanine 292 are disordered. A compositionally biased stretch (low complexity) spans serine 278–alanine 292.

It belongs to the RNase HII family. The cofactor is Mn(2+). Mg(2+) serves as cofactor.

Its subcellular location is the cytoplasm. It catalyses the reaction Endonucleolytic cleavage to 5'-phosphomonoester.. Endonuclease that specifically degrades the RNA of RNA-DNA hybrids. This chain is Ribonuclease HII, found in Anaeromyxobacter sp. (strain Fw109-5).